The following is a 392-amino-acid chain: NADH-quinone oxidoreductase subunit D (392 aa).

This sequence belongs to the complex I 49 kDa subunit family. As to quaternary structure, NDH-1 is composed of 14 different subunits. Subunits NuoB, C, D, E, F, and G constitute the peripheral sector of the complex.

The protein localises to the cell inner membrane. The catalysed reaction is a quinone + NADH + 5 H(+)(in) = a quinol + NAD(+) + 4 H(+)(out). In terms of biological role, NDH-1 shuttles electrons from NADH, via FMN and iron-sulfur (Fe-S) centers, to quinones in the respiratory chain. The immediate electron acceptor for the enzyme in this species is believed to be ubiquinone. Couples the redox reaction to proton translocation (for every two electrons transferred, four hydrogen ions are translocated across the cytoplasmic membrane), and thus conserves the redox energy in a proton gradient. The chain is NADH-quinone oxidoreductase subunit D from Paramagnetospirillum magneticum (strain ATCC 700264 / AMB-1) (Magnetospirillum magneticum).